The chain runs to 222 residues: Ribonuclease HII (222 aa).

One can recognise an RNase H type-2 domain in the interval 32–222 (FHIAGVDEVG…LIKRYKEDIS (191 aa)). The a divalent metal cation site is built by Asp-38, Glu-39, and Asp-130.

The protein belongs to the RNase HII family. Mn(2+) is required as a cofactor. The cofactor is Mg(2+).

It is found in the cytoplasm. The enzyme catalyses Endonucleolytic cleavage to 5'-phosphomonoester.. In terms of biological role, endonuclease that specifically degrades the RNA of RNA-DNA hybrids. In Bartonella bacilliformis (strain ATCC 35685 / KC583 / Herrer 020/F12,63), this protein is Ribonuclease HII.